The following is a 217-amino-acid chain: ATP-dependent Clp protease proteolytic subunit (217 aa).

Serine 121 acts as the Nucleophile in catalysis. Residue histidine 146 is part of the active site.

This sequence belongs to the peptidase S14 family. As to quaternary structure, fourteen ClpP subunits assemble into 2 heptameric rings which stack back to back to give a disk-like structure with a central cavity, resembling the structure of eukaryotic proteasomes.

The protein resides in the cytoplasm. The catalysed reaction is Hydrolysis of proteins to small peptides in the presence of ATP and magnesium. alpha-casein is the usual test substrate. In the absence of ATP, only oligopeptides shorter than five residues are hydrolyzed (such as succinyl-Leu-Tyr-|-NHMec, and Leu-Tyr-Leu-|-Tyr-Trp, in which cleavage of the -Tyr-|-Leu- and -Tyr-|-Trp bonds also occurs).. Its function is as follows. Cleaves peptides in various proteins in a process that requires ATP hydrolysis. Has a chymotrypsin-like activity. Plays a major role in the degradation of misfolded proteins. The polypeptide is ATP-dependent Clp protease proteolytic subunit (Burkholderia vietnamiensis (strain G4 / LMG 22486) (Burkholderia cepacia (strain R1808))).